We begin with the raw amino-acid sequence, 844 residues long: MSGESDQPQPGPSHAGLYLEHRERDQAGVPGGVIRRAGSQRHRSWIQTVIEQITGSPRQCVTLSEVVPVSVLAVQRYLLEDEPRDTVPKPPLYCYDVTISDGVYQEKCYLDPSLNFLVYQNILKVGIEMRISRVSCLYNEKRLGQGILCIDKVHCGEPLDVISVETPFRNRAHEEKPERPLRGSKSHYLALWNNEDPYGDIWKTNKQPEEFNFNNTKIISLSHLEMTWHNRKNFPALLVRILHKSKLRYYGKPNKKMIEPYQTYLEVADSSGMVSVIMWNALCPEWYKSLRVGLILLLQDYSVKKSYPLRIQPDPVDPQMKLISTMEICLNLRDPPTNIVIIPEKQLKSEWKLPKLINRFITRSELDDMPENSICDVIGMLSFVGRVQRSKKKENSEDFWSYRWIHITDGTSEQPFIVQLFSTSQPEVFENIYPMTYFVCTQLKVVRNNSQVPKLLYLTTTNESRVLITGHRGQPYTYDTKAKKIIQWIKTKTNLEAKNTVIGGYYPYPPVPETFSKYSRFIKAESLLTTISEVRKVIEDLQYREQKRIAIQGIITAIKYIPYNHSAKSAPASETLQNASPPSTSQAAAKEGHYHERGSKRSQDDRPMDSLPMVLSLCAKRKILQGPTANPVPVPQPHSSAQMKGNKPNIPSRENSTANATGKSKRIINDRWESQLWRDKKFSLRDHLHYGHVDPESIPRKFILGHEKFLTQQFNSQPAKYVPPEGKPPKLDEFQSARSLGHFEVTILGLNHEIAIDVAFLPMYSPEDVETSQIDTFLTCMNYSCVYPPAAPVSGRVPDPKAVAGDIVKAAADLDRVHIIGILDICNLGNNKVEVCLQKIYTPE.

Residues 228–331 (WHNRKNFPAL…LISTMEICLN (104 aa)) constitute a DNA-binding region (OB). Disordered regions lie at residues 571-609 (PASE…RPMD) and 626-664 (GPTA…TGKS). Positions 572–587 (ASETLQNASPPSTSQA) are enriched in polar residues. The span at 590-608 (KEGHYHERGSKRSQDDRPM) shows a compositional bias: basic and acidic residues. Positions 652-662 (SRENSTANATG) are enriched in polar residues.

It is found in the chromosome. In terms of biological role, single-stranded DNA-binding protein recruited to replication forks to maintain genome stability. Prevents fork collapse by antagonizing the accumulation of RAD51 at forks to ensure the proper balance of fork remodeling and protection without interfering with the capacity of cells to complete homologous recombination of double-strand breaks. The chain is RPA-related protein RADX from Rattus norvegicus (Rat).